The chain runs to 902 residues: U3 small nucleolar RNA-associated protein 21 homolog (902 aa).

14 WD repeats span residues 40 to 71 (DIEA…LLFV), 80 to 110 (TCLK…WDID), 119 to 154 (THLD…LHTT), 164 to 198 (TSLL…RVHE), 206 to 243 (GITS…MEFK), 249 to 284 (LSCS…QNVT), 289 to 332 (FGSL…RSRN), 339 to 373 (SFVK…QSTE), 399 to 438 (TALS…GQHV), 447 to 481 (VRSV…KRKS), 492 to 528 (VTAV…DSLD), 533 to 568 (ITHA…VREL), 570 to 611 (GHSN…DSIS), and 613 to 651 (PSVC…KHVS).

Interacts with snoRNA U3. Interacts with MPP10. Component of the ribosomal small subunit (SSU) processome composed of at least 40 protein subunits and snoRNA U3.

It localises to the nucleus. The protein resides in the nucleolus. Its function is as follows. Involved in nucleolar processing of pre-18S ribosomal RNA and ribosome assembly. In Schizosaccharomyces pombe (strain 972 / ATCC 24843) (Fission yeast), this protein is U3 small nucleolar RNA-associated protein 21 homolog.